A 116-amino-acid polypeptide reads, in one-letter code: Ribonuclease P protein component (116 aa).

This sequence belongs to the RnpA family. As to quaternary structure, consists of a catalytic RNA component (M1 or rnpB) and a protein subunit.

It carries out the reaction Endonucleolytic cleavage of RNA, removing 5'-extranucleotides from tRNA precursor.. Its function is as follows. RNaseP catalyzes the removal of the 5'-leader sequence from pre-tRNA to produce the mature 5'-terminus. It can also cleave other RNA substrates such as 4.5S RNA. The protein component plays an auxiliary but essential role in vivo by binding to the 5'-leader sequence and broadening the substrate specificity of the ribozyme. The polypeptide is Ribonuclease P protein component (Gluconacetobacter diazotrophicus (strain ATCC 49037 / DSM 5601 / CCUG 37298 / CIP 103539 / LMG 7603 / PAl5)).